The chain runs to 484 residues: Phosphomethylpyrimidine synthase (484 aa).

Substrate is bound by residues Asn-97, Met-126, Tyr-156, His-192, 212–214, 253–256, and Glu-292; these read SRG and DSLR. His-296 contacts Zn(2+). Tyr-319 provides a ligand contact to substrate. His-360 is a Zn(2+) binding site. [4Fe-4S] cluster-binding residues include Cys-440, Cys-443, and Cys-448.

It belongs to the ThiC family. It depends on [4Fe-4S] cluster as a cofactor.

The enzyme catalyses 5-amino-1-(5-phospho-beta-D-ribosyl)imidazole + S-adenosyl-L-methionine = 4-amino-2-methyl-5-(phosphooxymethyl)pyrimidine + CO + 5'-deoxyadenosine + formate + L-methionine + 3 H(+). It functions in the pathway cofactor biosynthesis; thiamine diphosphate biosynthesis. Catalyzes the synthesis of the hydroxymethylpyrimidine phosphate (HMP-P) moiety of thiamine from aminoimidazole ribotide (AIR) in a radical S-adenosyl-L-methionine (SAM)-dependent reaction. The sequence is that of Phosphomethylpyrimidine synthase from Synechococcus sp. (strain CC9605).